We begin with the raw amino-acid sequence, 533 residues long: Nitrogen fixation protein AnfA (533 aa).

Positions 33–193 (ILYKISQIIT…PLVELYLIEN (161 aa)) are a domain. The region spanning 46 to 186 (DLADALSIVL…MIATMIAPLV (141 aa)) is the GAF domain. Residues 219–448 (IIGNSKPMQE…LENVMERAVI (230 aa)) form the Sigma-54 factor interaction domain. Residues 247–254 (GESGVGKE) and 310–319 (ADGGTIFLDE) each bind ATP. A DNA-binding region (H-T-H motif) is located at residues 501–520 (IGEAAKELGLARRMLGVRME).

In terms of biological role, anfA is essential for nitrogen fixation under Mo- and V-deficient conditions. It is required for the regulation of nitrogenase 3 transcription. Interacts with sigma-54. The protein is Nitrogen fixation protein AnfA (anfA) of Azotobacter vinelandii.